A 203-amino-acid polypeptide reads, in one-letter code: Cell division protein SepF (203 aa).

2 disordered regions span residues 26-51 and 167-203; these read DGEL…RRGQ and GTAS…WRNQ. 2 stretches are compositionally biased toward basic and acidic residues: residues 39–50 and 183–203; these read EPPRRSAPERRG and RRSE…WRNQ.

Belongs to the SepF family. As to quaternary structure, homodimer. Interacts with FtsZ.

The protein localises to the cytoplasm. In terms of biological role, cell division protein that is part of the divisome complex and is recruited early to the Z-ring. Probably stimulates Z-ring formation, perhaps through the cross-linking of FtsZ protofilaments. Its function overlaps with FtsA. The chain is Cell division protein SepF from Symbiobacterium thermophilum (strain DSM 24528 / JCM 14929 / IAM 14863 / T).